We begin with the raw amino-acid sequence, 464 residues long: Glutamate--tRNA ligase (464 aa).

A 'HIGH' region motif is present at residues 10–20 (PSPTGHLHLGG). Zn(2+) is bound by residues cysteine 99, cysteine 101, cysteine 126, and glutamate 128. Positions 236–240 (KLSKR) match the 'KMSKS' region motif. Residue lysine 239 participates in ATP binding.

Belongs to the class-I aminoacyl-tRNA synthetase family. Glutamate--tRNA ligase type 1 subfamily. Monomer. It depends on Zn(2+) as a cofactor.

It is found in the cytoplasm. It catalyses the reaction tRNA(Glu) + L-glutamate + ATP = L-glutamyl-tRNA(Glu) + AMP + diphosphate. In terms of biological role, catalyzes the attachment of glutamate to tRNA(Glu) in a two-step reaction: glutamate is first activated by ATP to form Glu-AMP and then transferred to the acceptor end of tRNA(Glu). In Oleidesulfovibrio alaskensis (strain ATCC BAA-1058 / DSM 17464 / G20) (Desulfovibrio alaskensis), this protein is Glutamate--tRNA ligase.